The chain runs to 143 residues: Endoribonuclease YbeY (143 aa).

Residues His113, His117, and Asp123 each coordinate Zn(2+).

The protein belongs to the endoribonuclease YbeY family. It depends on Zn(2+) as a cofactor.

Its subcellular location is the cytoplasm. In terms of biological role, single strand-specific metallo-endoribonuclease involved in late-stage 70S ribosome quality control and in maturation of the 3' terminus of the 16S rRNA. The chain is Endoribonuclease YbeY from Elusimicrobium minutum (strain Pei191).